Here is a 380-residue protein sequence, read N- to C-terminus: Alkaline protease (380 aa).

An N-terminal signal peptide occupies residues 1-27 (MKKPLGKIVASTALLISVAFSSSIASA). Residues 28-111 (AEEAKEKYLI…IEEDAEVTTM (84 aa)) constitute a propeptide that is removed on maturation. Residues 34 to 111 (KYLIGFNEQE…IEEDAEVTTM (78 aa)) form the Inhibitor I9 domain. Gln-113 provides a ligand contact to Ca(2+). The Peptidase S8 domain maps to 116–379 (PWGISRVQAP…SGLVNAEAAT (264 aa)). Asp-143 (charge relay system) is an active-site residue. Asp-151 lines the Ca(2+) pocket. The Charge relay system role is filled by His-173. Positions 184, 186, 188, 190, 274, 276, and 279 each coordinate Ca(2+). The Charge relay system role is filled by Ser-326.

This sequence belongs to the peptidase S8 family. It depends on Ca(2+) as a cofactor.

Its subcellular location is the secreted. This is Alkaline protease from Shouchella clausii (Alkalihalobacillus clausii).